We begin with the raw amino-acid sequence, 353 residues long: tRNA N6-adenosine threonylcarbamoyltransferase (353 aa).

His-109 and His-113 together coordinate Fe cation. Substrate contacts are provided by residues 136–140 (TVSGG), Asp-169, Gly-182, Asp-186, and Asn-284. Position 312 (Asp-312) interacts with Fe cation.

The protein belongs to the KAE1 / TsaD family. Requires Fe(2+) as cofactor.

Its subcellular location is the cytoplasm. The catalysed reaction is L-threonylcarbamoyladenylate + adenosine(37) in tRNA = N(6)-L-threonylcarbamoyladenosine(37) in tRNA + AMP + H(+). Required for the formation of a threonylcarbamoyl group on adenosine at position 37 (t(6)A37) in tRNAs that read codons beginning with adenine. Is involved in the transfer of the threonylcarbamoyl moiety of threonylcarbamoyl-AMP (TC-AMP) to the N6 group of A37, together with TsaE and TsaB. TsaD likely plays a direct catalytic role in this reaction. The chain is tRNA N6-adenosine threonylcarbamoyltransferase from Chlorobaculum tepidum (strain ATCC 49652 / DSM 12025 / NBRC 103806 / TLS) (Chlorobium tepidum).